We begin with the raw amino-acid sequence, 367 residues long: Glutamate 5-kinase (367 aa).

Lys10 contributes to the ATP binding site. Ser50, Asp137, and Asn149 together coordinate substrate. ATP contacts are provided by residues 169-170 and 211-217; these read TD and TGGMATK. The region spanning 275-353 is the PUA domain; the sequence is AGEITVDDGA…QQISEILGYE (79 aa).

Belongs to the glutamate 5-kinase family.

The protein localises to the cytoplasm. It catalyses the reaction L-glutamate + ATP = L-glutamyl 5-phosphate + ADP. The protein operates within amino-acid biosynthesis; L-proline biosynthesis; L-glutamate 5-semialdehyde from L-glutamate: step 1/2. Its function is as follows. Catalyzes the transfer of a phosphate group to glutamate to form L-glutamate 5-phosphate. The polypeptide is Glutamate 5-kinase (Yersinia pseudotuberculosis serotype IB (strain PB1/+)).